The chain runs to 1085 residues: Tudor domain-containing protein 7B (1085 aa).

The 74-residue stretch at 3-76 (DEELVKKMVR…SGEVMCHATT (74 aa)) folds into the HTH OST-type 1 domain. Disordered regions lie at residues 112-183 (APLV…PEKR), 200-228 (RNPQ…SAPY), and 297-341 (PAKE…KALS). The segment covering 203–216 (QHINVPSNLNENTT) has biased composition (polar residues). The HTH OST-type 2 domain occupies 229–299 (SPKLVQSRLQ…PQELLLYPAK (71 aa)). The segment covering 322 to 335 (TQRPSLTAKSNTPE) has biased composition (polar residues). The region spanning 340-410 (LSPDLKQKLG…PKRAILYAKV (71 aa)) is the HTH OST-type 3 domain. 2 Tudor domains span residues 496 to 554 (SPSP…FYRL) and 686 to 743 (RPFC…LLRD). The segment covering 843–853 (NVPTATQTSSL) has biased composition (polar residues). The tract at residues 843-888 (NVPTATQTSSLKTDRGDKALHTPKKTSPPLGSKSTPAGSPPERLSL) is disordered.

Its subcellular location is the cytoplasm. Its function is as follows. Component of specific cytoplasmic RNA granules involved in post-transcriptional regulation of specific genes: probably acts by binding to specific mRNAs and regulating their translation. Probably required during spermatogenesis. The protein is Tudor domain-containing protein 7B (tdrd7b) of Danio rerio (Zebrafish).